A 497-amino-acid polypeptide reads, in one-letter code: Pseudooxynicotine dehydrogenase (497 aa).

Residues 1–43 (MANDKGDISKDGVSRRKFLGGAVIGAAAAAGVGSQILSLSATA) constitute a signal peptide (tat-type signal). Positions 70, 89, 97, 114, 286, 462, and 472 each coordinate FAD.

The protein belongs to the flavin monoamine oxidase family. Homodimer. It depends on FAD as a cofactor. Predicted to be exported by the Tat system. The position of the signal peptide cleavage has not been experimentally proven.

It localises to the periplasm. The catalysed reaction is pseudooxynicotine + 2 Fe(III)-[cytochrome c] + H2O = 4-oxo-4-(pyridin-3-yl)butanal + methylamine + 2 Fe(II)-[cytochrome c] + 2 H(+). The protein operates within alkaloid degradation; nicotine degradation. With respect to regulation, strongly inhibited by Ag(+), Co(2+), Cu(2+) and Hg(2+). Functionally, involved in nicotine degradation. Catalyzes the deamination of pseudooxynicotine to 3-succinoylsemialdehyde-pyridine. The chain is Pseudooxynicotine dehydrogenase from Pseudomonas sp.